The following is a 60-amino-acid chain: Chromatin protein Cren7 (60 aa).

This sequence belongs to the Cren7 family. As to quaternary structure, monomer. Post-translationally, methylated at multiple sites, to varying extents.

The protein localises to the chromosome. The protein resides in the cytoplasm. Functionally, a chromatin protein, binds double-stranded DNA without sequence specificity. Constrains negative DNA supercoils. This is Chromatin protein Cren7 from Saccharolobus islandicus (strain M.16.4 / Kamchatka #3) (Sulfolobus islandicus).